The following is a 173-amino-acid chain: Shikimate kinase (173 aa).

14–19 (GAGKST) provides a ligand contact to ATP. Residue serine 18 coordinates Mg(2+). Positions 36, 60, and 82 each coordinate substrate. Arginine 120 lines the ATP pocket. Arginine 140 contacts substrate. Position 157 (glutamine 157) interacts with ATP.

Belongs to the shikimate kinase family. As to quaternary structure, monomer. Mg(2+) serves as cofactor.

Its subcellular location is the cytoplasm. It carries out the reaction shikimate + ATP = 3-phosphoshikimate + ADP + H(+). It participates in metabolic intermediate biosynthesis; chorismate biosynthesis; chorismate from D-erythrose 4-phosphate and phosphoenolpyruvate: step 5/7. In terms of biological role, catalyzes the specific phosphorylation of the 3-hydroxyl group of shikimic acid using ATP as a cosubstrate. The sequence is that of Shikimate kinase from Baumannia cicadellinicola subsp. Homalodisca coagulata.